Here is a 44-residue protein sequence, read N- to C-terminus: Protein PsbN (44 aa).

Residues 6–26 (FFFTIFLWCLLLSVTGYSVYV) form a helical membrane-spanning segment.

The protein belongs to the PsbN family.

It is found in the plastid. The protein localises to the chloroplast thylakoid membrane. May play a role in photosystem I and II biogenesis. The sequence is that of Protein PsbN from Oltmannsiellopsis viridis (Marine flagellate).